The primary structure comprises 229 residues: Small ribosomal subunit protein uS3 (229 aa).

A KH type-2 domain is found at Val39–Arg107.

Belongs to the universal ribosomal protein uS3 family. In terms of assembly, part of the 30S ribosomal subunit. Forms a tight complex with proteins S10 and S14.

Functionally, binds the lower part of the 30S subunit head. Binds mRNA in the 70S ribosome, positioning it for translation. In Shewanella frigidimarina (strain NCIMB 400), this protein is Small ribosomal subunit protein uS3.